The primary structure comprises 219 residues: Occludin/ELL domain-containing protein 1 (219 aa).

The segment at Met-1–Thr-110 is disordered. A compositionally biased stretch (low complexity) spans Leu-17–Arg-43. The span at Val-72–Gly-93 shows a compositional bias: basic and acidic residues. The region spanning Pro-100–Asp-210 is the OCEL domain.

Belongs to the ELL/occludin family.

The polypeptide is Occludin/ELL domain-containing protein 1 (Ocel1) (Mus musculus (Mouse)).